The chain runs to 392 residues: MSLTKKIKNEKSLKQEKQTDQLKSNLRNNNNNINNKSKPKDQNLNTLHYIKTHLKEELFFIFCVGGIYIFYLLYGLVQEQLNVTKFGTEKKVFGFTAFLLALQCFFNMVSAWLVSLVNKEQKDNTPFMKYGFVSMLLVISTFLSNQSIRYISYPTQVLAKSCKPIPVIFMGLLLFKKKYPFLKYIVVIVISLGISLFMLPKATSKKNIQFEGHDHLFGNFILFVSLMMDGVMGPFQDNLVRQYKPSATSMMLNTNIWNLGLFSIMAFARGEVSQAIDFILEYPEVIKLILAFCITSAIGQQFIFLTTNKFGSLNCSTITTTRKFFSILVSIFYFGHSLDNLQWAAICMVFGGLILDLYISYSNKKKGVVLSPIAAPVKHPTATTPLENKKSL.

The segment at 1 to 40 (MSLTKKIKNEKSLKQEKQTDQLKSNLRNNNNNINNKSKPK) is disordered. The span at 7–20 (IKNEKSLKQEKQTD) shows a compositional bias: basic and acidic residues. Positions 25-35 (NLRNNNNNINN) are enriched in low complexity. A run of 9 helical transmembrane segments spans residues 57 to 77 (ELFF…YGLV), 97 to 117 (AFLL…VSLV), 124 to 144 (NTPF…TFLS), 155 to 175 (TQVL…LLLF), 179 to 199 (YPFL…LFML), 215 to 235 (HLFG…MGPF), 247 to 267 (ATSM…IMAF), 285 to 305 (VIKL…FIFL), and 341 to 361 (LQWA…YISY). Residues 389-392 (KKSL) carry the Di-lysine motif motif.

The protein belongs to the nucleotide-sugar transporter family. SLC35B subfamily.

It localises to the endoplasmic reticulum membrane. Functionally, probable sugar transporter. This Dictyostelium discoideum (Social amoeba) protein is Solute carrier family 35 member B1 (slc35b1).